The following is a 538-amino-acid chain: Serine/threonine-protein phosphatase 5 (538 aa).

3 TPR repeats span residues 13–46, 48–80, and 81–114; these read AEEF…NSNN, VYWA…DSRY, and SKGY…SPND. Helical transmembrane passes span 163 to 183 and 185 to 205; these read SSMP…VVAV and GFAT…TFWW. Residues Asp282, His284, Asp311, and Asn343 each coordinate Mn(2+). The active-site Proton donor is the His344. 2 residues coordinate Mn(2+): His392 and His467.

This sequence belongs to the PPP phosphatase family. PP-5 (PP-T) subfamily. As to quaternary structure, interacts with PHYA and PHYB, mostly when they are phosphorylated and in Pfr forms. The cofactor is Mn(2+).

It localises to the endoplasmic reticulum membrane. The protein resides in the nucleus membrane. It is found in the cytoplasm. Its subcellular location is the nucleus. The protein localises to the nucleoplasm. It localises to the nucleus speckle. It carries out the reaction O-phospho-L-seryl-[protein] + H2O = L-seryl-[protein] + phosphate. It catalyses the reaction O-phospho-L-threonyl-[protein] + H2O = L-threonyl-[protein] + phosphate. With respect to regulation, activated by arachidonic acid (AA). Functionally, isoform 2 dephosphorylates phosphorylated phytochromes, with a preference toward Pfr forms, and enhances phytochrome-mediated photoresponses, probably by enhancing their stability and their binding affinity for light signal transducers such as NDPK2. Can use para-nitrophenylphosphate (pNPP) as substrate. In Arabidopsis thaliana (Mouse-ear cress), this protein is Serine/threonine-protein phosphatase 5 (PAPP5).